A 238-amino-acid chain; its full sequence is Probable transcriptional regulatory protein VV2_1184 (238 aa).

It belongs to the TACO1 family.

It is found in the cytoplasm. The chain is Probable transcriptional regulatory protein VV2_1184 from Vibrio vulnificus (strain CMCP6).